A 126-amino-acid chain; its full sequence is Thioredoxin H-type 1 (126 aa).

A Thioredoxin domain is found at 2 to 120; that stretch reads AANDATSSEE…LQQTIVKHAA (119 aa). Residues C46 and C49 each act as nucleophile in the active site. A disulfide bond links C46 and C49.

The protein belongs to the thioredoxin family. Plant H-type subfamily.

Its subcellular location is the cytoplasm. Its function is as follows. Participates in various redox reactions through the reversible oxidation of the active center dithiol to a disulfide. The H form is known to activate a number of cytosolic enzymes. In Nicotiana tabacum (Common tobacco), this protein is Thioredoxin H-type 1.